A 155-amino-acid chain; its full sequence is MSDLASLDTSQHPYLPQSASLLFDAKAKANLSFEQIAQHIGRNEVATAAIFYGQAKASKEDIIKLAELLRLPATALEMQMGGFPDRGRSVEMPPREPLIYRLYEIVQNYGYAYKAILNEKFGDGIMSAISFSTNVEKETDEDGNNWAIITMRGKW.

Catalysis depends on residues R101, E104, and S127.

It belongs to the cyanase family.

The catalysed reaction is cyanate + hydrogencarbonate + 3 H(+) = NH4(+) + 2 CO2. In terms of biological role, catalyzes the reaction of cyanate with bicarbonate to produce ammonia and carbon dioxide. This is Cyanate hydratase from Coccidioides posadasii (strain C735) (Valley fever fungus).